Consider the following 320-residue polypeptide: Geranylgeranyl pyrophosphate synthase (320 aa).

The isopentenyl diphosphate site is built by lysine 35, arginine 38, and histidine 67. Mg(2+) contacts are provided by aspartate 74 and aspartate 78. Arginine 83 provides a ligand contact to dimethylallyl diphosphate. Position 84 (arginine 84) interacts with isopentenyl diphosphate. Dimethylallyl diphosphate-binding residues include lysine 168, threonine 169, glutamine 206, lysine 223, and lysine 233.

It belongs to the FPP/GGPP synthase family. Requires Mg(2+) as cofactor.

Its subcellular location is the cytoplasm. It catalyses the reaction isopentenyl diphosphate + dimethylallyl diphosphate = (2E)-geranyl diphosphate + diphosphate. The enzyme catalyses isopentenyl diphosphate + (2E)-geranyl diphosphate = (2E,6E)-farnesyl diphosphate + diphosphate. It carries out the reaction isopentenyl diphosphate + (2E,6E)-farnesyl diphosphate = (2E,6E,10E)-geranylgeranyl diphosphate + diphosphate. It participates in isoprenoid biosynthesis; farnesyl diphosphate biosynthesis; farnesyl diphosphate from geranyl diphosphate and isopentenyl diphosphate: step 1/1. It functions in the pathway isoprenoid biosynthesis; geranyl diphosphate biosynthesis; geranyl diphosphate from dimethylallyl diphosphate and isopentenyl diphosphate: step 1/1. Its pathway is isoprenoid biosynthesis; geranylgeranyl diphosphate biosynthesis; geranylgeranyl diphosphate from farnesyl diphosphate and isopentenyl diphosphate: step 1/1. In terms of biological role, catalyzes the trans-addition of the 3 molecules of IPP onto DMAPP to form geranylgeranyl pyrophosphate. May be involved in vesicle trafficking and protein sorting. The sequence is that of Geranylgeranyl pyrophosphate synthase (BTS1) from Eremothecium gossypii (strain ATCC 10895 / CBS 109.51 / FGSC 9923 / NRRL Y-1056) (Yeast).